A 253-amino-acid chain; its full sequence is Imidazole glycerol phosphate synthase subunit HisF (253 aa).

Active-site residues include aspartate 11 and aspartate 130.

Belongs to the HisA/HisF family. Heterodimer of HisH and HisF.

It is found in the cytoplasm. It catalyses the reaction 5-[(5-phospho-1-deoxy-D-ribulos-1-ylimino)methylamino]-1-(5-phospho-beta-D-ribosyl)imidazole-4-carboxamide + L-glutamine = D-erythro-1-(imidazol-4-yl)glycerol 3-phosphate + 5-amino-1-(5-phospho-beta-D-ribosyl)imidazole-4-carboxamide + L-glutamate + H(+). It functions in the pathway amino-acid biosynthesis; L-histidine biosynthesis; L-histidine from 5-phospho-alpha-D-ribose 1-diphosphate: step 5/9. In terms of biological role, IGPS catalyzes the conversion of PRFAR and glutamine to IGP, AICAR and glutamate. The HisF subunit catalyzes the cyclization activity that produces IGP and AICAR from PRFAR using the ammonia provided by the HisH subunit. The chain is Imidazole glycerol phosphate synthase subunit HisF from Ruminiclostridium cellulolyticum (strain ATCC 35319 / DSM 5812 / JCM 6584 / H10) (Clostridium cellulolyticum).